A 127-amino-acid polypeptide reads, in one-letter code: Holo-[acyl-carrier-protein] synthase (127 aa).

Aspartate 8 and glutamate 59 together coordinate Mg(2+).

It belongs to the P-Pant transferase superfamily. AcpS family. Mg(2+) is required as a cofactor.

Its subcellular location is the cytoplasm. The enzyme catalyses apo-[ACP] + CoA = holo-[ACP] + adenosine 3',5'-bisphosphate + H(+). Its function is as follows. Transfers the 4'-phosphopantetheine moiety from coenzyme A to a Ser of acyl-carrier-protein. This is Holo-[acyl-carrier-protein] synthase from Rickettsia bellii (strain OSU 85-389).